We begin with the raw amino-acid sequence, 95 residues long: uncharacterized protein (95 aa).

This is an uncharacterized protein from Caenorhabditis elegans.